Reading from the N-terminus, the 377-residue chain is Hydrogenase maturation factor HypD (377 aa).

Fe cation-binding residues include C41, C69, and C72.

Belongs to the HypD family. [4Fe-4S] cluster is required as a cofactor.

It participates in protein modification; [NiFe] hydrogenase maturation. Functionally, involved in the maturation of [NiFe] hydrogenases. Involved in the biosynthesis of the Fe(CN)(2)CO cofactor. The chain is Hydrogenase maturation factor HypD from Rhodobacter capsulatus (Rhodopseudomonas capsulata).